The chain runs to 334 residues: MLTYAQAGVDDEKTVRALKNIIGLARETFKFRRGKPGEPAENLGHYSALLDFGNFYLAMTTDGVGTKVLVAEAVGKFNTIGIDMIAMNVNDLLCVGAEPIALVDYLAVREPDEKIFAEIAKGLYAGAEKAGIAIVGGETAVMPDLINGFDLAGTAIGIVEKGKVITGEEMRPDDAVIGISSSGIHSNGLTLARKLLIPKYGLDYEYEGRKLWEWLLEPTRIYVRAVLELLERVEVHGLAHITGGGLINLKRLTNYGFSLEMPPIEGIFKLIHENGVPLEEMFRVFNMGVGFVAIVPPEEKEEALGILNKYYESFELGRVTKEPGIRVENYGIKL.

The protein belongs to the AIR synthase family.

It is found in the cytoplasm. The enzyme catalyses 2-formamido-N(1)-(5-O-phospho-beta-D-ribosyl)acetamidine + ATP = 5-amino-1-(5-phospho-beta-D-ribosyl)imidazole + ADP + phosphate + H(+). It participates in purine metabolism; IMP biosynthesis via de novo pathway; 5-amino-1-(5-phospho-D-ribosyl)imidazole from N(2)-formyl-N(1)-(5-phospho-D-ribosyl)glycinamide: step 2/2. This chain is Phosphoribosylformylglycinamidine cyclo-ligase, found in Thermococcus gammatolerans (strain DSM 15229 / JCM 11827 / EJ3).